Consider the following 265-residue polypeptide: Dehydrin COR47 (265 aa).

Over residues 1 to 14 (MAEEYKNNVPEHET) the composition is skewed to basic and acidic residues. The disordered stretch occupies residues 1 to 265 (MAEEYKNNVP…EVKKEKESDD (265 aa)). Residue A2 is modified to N-acetylalanine. Positions 16–28 (TVATEESPATTTE) are enriched in polar residues. Basic and acidic residues predominate over residues 29–47 (VTDRGLFDFLGKKEEEVKP). S64 is subject to Phosphoserine. Over residues 69-79 (AAEHEEVKENK) the composition is skewed to basic and acidic residues. T90 carries the phosphothreonine modification. Composition is skewed to basic and acidic residues over residues 96-105 (NKPSVIEKLH) and 129-156 (IVEG…KTAE). Repeat 1 spans residues 133–153 (EEDKKGLVEKIKEKLPGHHDK). The interval 133–251 (EEDKKGLVEK…KEKLPGYHAK (119 aa)) is 3 X 21 AA repeats, Lys-rich. Residues 160-172 (PVSTTIPVPVSES) show a composition bias toward low complexity. 2 stretches are compositionally biased toward basic and acidic residues: residues 173-204 (VVEH…KAED) and 227-265 (PVEH…ESDD). Tandem repeats lie at residues 180-200 (EEEK…HHDE) and 231-251 (PEEK…YHAK).

Belongs to the plant dehydrin family.

The chain is Dehydrin COR47 (COR47) from Arabidopsis thaliana (Mouse-ear cress).